The primary structure comprises 654 residues: uncharacterized protein (654 aa).

Positions 1–13 are enriched in polar residues; that stretch reads MSNLILTPSNNGT. A disordered region spans residues 1 to 23; the sequence is MSNLILTPSNNGTERPYRSRKTR. The segment at residues 25-54 is a DNA-binding region (zn(2)-C6 fungal-type); that stretch reads CDNCRLRKSRCVVESIGNPCLLCTQLKIPC. The tract at residues 63–96 is disordered; it reads RNKQKKQQDSVSDDTPSEATTTTNDDRDPKYNAL.

It localises to the cytoplasm. Its subcellular location is the nucleus. This is an uncharacterized protein from Schizosaccharomyces pombe (strain 972 / ATCC 24843) (Fission yeast).